Here is a 755-residue protein sequence, read N- to C-terminus: Kelch-like protein 5 (755 aa).

Positions 152 to 184 (LDRPEVDDGTSEEENESDSSSCRTSNSSQTLSS) are disordered. The span at 158 to 168 (DDGTSEEENES) shows a compositional bias: acidic residues. Low complexity predominate over residues 169–184 (DSSSCRTSNSSQTLSS). Positions 220 to 287 (CDVILVAGDR…AYTGRLELKE (68 aa)) constitute a BTB domain. 6 Kelch repeats span residues 468–514 (TLFA…VLDD), 515–561 (KLYV…VLEG), 563–608 (MYAV…VLSG), 609–655 (KLYA…TWNG), 657–708 (LYAI…LLGD), and 709–754 (KLYA…VTVK).

Expressed in adrenal gland, ovary and thyroid gland and less abundantly in lymph node, prostate, spinal cord, testis and trachea.

The protein localises to the cytoplasm. The protein resides in the cytoskeleton. This is Kelch-like protein 5 (KLHL5) from Homo sapiens (Human).